Here is a 197-residue protein sequence, read N- to C-terminus: GTP cyclohydrolase 1 (197 aa).

Residues Cys-85, His-88, and Cys-156 each coordinate Zn(2+).

Belongs to the GTP cyclohydrolase I family. Toroid-shaped homodecamer, composed of two pentamers of five dimers.

The catalysed reaction is GTP + H2O = 7,8-dihydroneopterin 3'-triphosphate + formate + H(+). The protein operates within cofactor biosynthesis; 7,8-dihydroneopterin triphosphate biosynthesis; 7,8-dihydroneopterin triphosphate from GTP: step 1/1. This Mesorhizobium japonicum (strain LMG 29417 / CECT 9101 / MAFF 303099) (Mesorhizobium loti (strain MAFF 303099)) protein is GTP cyclohydrolase 1.